Here is a 53-residue protein sequence, read N- to C-terminus: Large ribosomal subunit protein eL40 (53 aa).

It belongs to the eukaryotic ribosomal protein eL40 family.

This Pyrobaculum calidifontis (strain DSM 21063 / JCM 11548 / VA1) protein is Large ribosomal subunit protein eL40.